The following is a 253-amino-acid chain: Ditrans,polycis-undecaprenyl-diphosphate synthase ((2E,6E)-farnesyl-diphosphate specific) (253 aa).

Aspartate 26 is an active-site residue. Position 26 (aspartate 26) interacts with Mg(2+). Substrate-binding positions include 27-30 (GNGR), tryptophan 31, arginine 39, histidine 43, and 71-73 (SSE). Asparagine 74 functions as the Proton acceptor in the catalytic mechanism. Substrate is bound by residues tryptophan 75, arginine 77, and arginine 194. A Mg(2+)-binding site is contributed by histidine 199. 200–202 (RIS) serves as a coordination point for substrate. Glutamate 213 is a Mg(2+) binding site.

This sequence belongs to the UPP synthase family. Homodimer. It depends on Mg(2+) as a cofactor.

It carries out the reaction 8 isopentenyl diphosphate + (2E,6E)-farnesyl diphosphate = di-trans,octa-cis-undecaprenyl diphosphate + 8 diphosphate. Functionally, catalyzes the sequential condensation of isopentenyl diphosphate (IPP) with (2E,6E)-farnesyl diphosphate (E,E-FPP) to yield (2Z,6Z,10Z,14Z,18Z,22Z,26Z,30Z,34E,38E)-undecaprenyl diphosphate (di-trans,octa-cis-UPP). UPP is the precursor of glycosyl carrier lipid in the biosynthesis of bacterial cell wall polysaccharide components such as peptidoglycan and lipopolysaccharide. In Shigella flexneri, this protein is Ditrans,polycis-undecaprenyl-diphosphate synthase ((2E,6E)-farnesyl-diphosphate specific).